A 156-amino-acid polypeptide reads, in one-letter code: 6,7-dimethyl-8-ribityllumazine synthase (156 aa).

5-amino-6-(D-ribitylamino)uracil-binding positions include phenylalanine 22, 57–59 (AYE), and 81–83 (TVI). Residue 86–87 (GT) participates in (2S)-2-hydroxy-3-oxobutyl phosphate binding. Histidine 89 functions as the Proton donor in the catalytic mechanism. Phenylalanine 114 lines the 5-amino-6-(D-ribitylamino)uracil pocket. A (2S)-2-hydroxy-3-oxobutyl phosphate-binding site is contributed by arginine 128.

This sequence belongs to the DMRL synthase family. In terms of assembly, forms an icosahedral capsid composed of 60 subunits, arranged as a dodecamer of pentamers.

It catalyses the reaction (2S)-2-hydroxy-3-oxobutyl phosphate + 5-amino-6-(D-ribitylamino)uracil = 6,7-dimethyl-8-(1-D-ribityl)lumazine + phosphate + 2 H2O + H(+). The protein operates within cofactor biosynthesis; riboflavin biosynthesis; riboflavin from 2-hydroxy-3-oxobutyl phosphate and 5-amino-6-(D-ribitylamino)uracil: step 1/2. In terms of biological role, catalyzes the formation of 6,7-dimethyl-8-ribityllumazine by condensation of 5-amino-6-(D-ribitylamino)uracil with 3,4-dihydroxy-2-butanone 4-phosphate. This is the penultimate step in the biosynthesis of riboflavin. In Escherichia coli O45:K1 (strain S88 / ExPEC), this protein is 6,7-dimethyl-8-ribityllumazine synthase.